The following is an 802-amino-acid chain: DEAD-box ATP-dependent RNA helicase 28 (802 aa).

Positions methionine 1 to proline 179 are disordered. Composition is skewed to acidic residues over residues glycine 76–glutamate 131 and lysine 138–glutamate 169. Coiled coils occupy residues aspartate 90–valine 122 and glutamine 149–serine 174. Positions asparagine 194 to alanine 222 match the Q motif motif. The 175-residue stretch at isoleucine 225–leucine 399 folds into the Helicase ATP-binding domain. Residue alanine 238 to threonine 245 participates in ATP binding. The DEAD box signature appears at aspartate 347–aspartate 350. The 145-residue stretch at valine 429–alanine 573 folds into the Helicase C-terminal domain. The stretch at valine 572–lysine 616 forms a coiled coil. The segment at lysine 639–lysine 802 is disordered. Over residues serine 644 to glutamine 659 the composition is skewed to polar residues. Residues lysine 666–arginine 684 are compositionally biased toward basic residues. Residues arginine 671–lysine 712 adopt a coiled-coil conformation. The segment covering methionine 691–alanine 702 has biased composition (acidic residues). Residues arginine 776–lysine 802 show a composition bias toward basic residues.

Belongs to the DEAD box helicase family. DDX27/DRS1 subfamily.

It carries out the reaction ATP + H2O = ADP + phosphate + H(+). The protein is DEAD-box ATP-dependent RNA helicase 28 of Oryza sativa subsp. japonica (Rice).